The sequence spans 221 residues: MFQSSIYNKNYKKFLKNLKYQGEYAVTLGILAISILLLTGFNQFLNTKPTLKKNYFLNQKSIKNTLKNWNDIIATTANKYKVDEKLIKSIVYVESSGNPYAKSQSNAIGLMQIKPSSAGAEVYRLNGKKGRPSIQELYDPKTNIDIGTSYISFLQKKFISIKNKDVMRYAIIVAYVNGTSALLKTFSKSRKEAINIINTMTKKSFCTHIKKNTRQCKHFVI.

Belongs to the transglycosylase Slt family.

It carries out the reaction Exolytic cleavage of the (1-&gt;4)-beta-glycosidic linkage between N-acetylmuramic acid (MurNAc) and N-acetylglucosamine (GlcNAc) residues in peptidoglycan, from either the reducing or the non-reducing ends of the peptidoglycan chains, with concomitant formation of a 1,6-anhydrobond in the MurNAc residue.. Its function is as follows. Murein-degrading enzyme. May play a role in recycling of muropeptides during cell elongation and/or cell division. The polypeptide is Membrane-bound lytic murein transglycosylase E (mltE) (Buchnera aphidicola subsp. Acyrthosiphon pisum (strain APS) (Acyrthosiphon pisum symbiotic bacterium)).